Consider the following 260-residue polypeptide: Thiazole synthase (260 aa).

Catalysis depends on Lys-96, which acts as the Schiff-base intermediate with DXP. 1-deoxy-D-xylulose 5-phosphate is bound by residues Gly-157, 184–185, and 206–207; these read AG and NT.

The protein belongs to the ThiG family. As to quaternary structure, homotetramer. Forms heterodimers with either ThiH or ThiS.

The protein resides in the cytoplasm. The enzyme catalyses [ThiS sulfur-carrier protein]-C-terminal-Gly-aminoethanethioate + 2-iminoacetate + 1-deoxy-D-xylulose 5-phosphate = [ThiS sulfur-carrier protein]-C-terminal Gly-Gly + 2-[(2R,5Z)-2-carboxy-4-methylthiazol-5(2H)-ylidene]ethyl phosphate + 2 H2O + H(+). It participates in cofactor biosynthesis; thiamine diphosphate biosynthesis. Its function is as follows. Catalyzes the rearrangement of 1-deoxy-D-xylulose 5-phosphate (DXP) to produce the thiazole phosphate moiety of thiamine. Sulfur is provided by the thiocarboxylate moiety of the carrier protein ThiS. In vitro, sulfur can be provided by H(2)S. The sequence is that of Thiazole synthase from Nitrobacter hamburgensis (strain DSM 10229 / NCIMB 13809 / X14).